We begin with the raw amino-acid sequence, 359 residues long: 5-amino-6-(D-ribitylamino)uracil--L-tyrosine 4-hydroxyphenyl transferase (359 aa).

One can recognise a Radical SAM core domain in the interval 45-282; the sequence is VTYVLNANIN…VYAISRIFFK (238 aa). Residues Cys59, Cys63, and Cys66 each coordinate [4Fe-4S] cluster.

The protein belongs to the radical SAM superfamily. CofH family. As to quaternary structure, consists of two subunits, CofG and CofH. [4Fe-4S] cluster serves as cofactor.

The enzyme catalyses 5-amino-6-(D-ribitylamino)uracil + L-tyrosine + S-adenosyl-L-methionine = 5-amino-5-(4-hydroxybenzyl)-6-(D-ribitylimino)-5,6-dihydrouracil + 2-iminoacetate + 5'-deoxyadenosine + L-methionine + H(+). It participates in cofactor biosynthesis; coenzyme F0 biosynthesis. Functionally, catalyzes the radical-mediated synthesis of 5-amino-5-(4-hydroxybenzyl)-6-(D-ribitylimino)-5,6-dihydrouracil from 5-amino-6-(D-ribitylamino)uracil and L-tyrosine. This Methanococcus vannielii (strain ATCC 35089 / DSM 1224 / JCM 13029 / OCM 148 / SB) protein is 5-amino-6-(D-ribitylamino)uracil--L-tyrosine 4-hydroxyphenyl transferase.